A 473-amino-acid chain; its full sequence is Serine palmitoyltransferase 1 (473 aa).

Residues 1 to 15 are Lumenal-facing; the sequence is MATVAEQWVLVEMVQ. The interaction with SPTLC2 stretch occupies residues 1–66; the sequence is MATVAEQWVL…KEELIEEWQP (66 aa). Residues 16–36 form a helical membrane-spanning segment; the sequence is ALYEAPAYHLILEGILILWII. The Cytoplasmic portion of the chain corresponds to 37-473; sequence RLVFSKTYKL…IREAAQAVLL (437 aa). A Phosphotyrosine; by ABL modification is found at Tyr164.

Belongs to the class-II pyridoxal-phosphate-dependent aminotransferase family. As to quaternary structure, component of the serine palmitoyltransferase (SPT) complex, which is also composed of SPTLC2 or SPTLC3 and SPTSSA or SPTSSB. The heterodimer with SPTLC2 or SPTLC3 forms the catalytic core of the enzyme, while SPTSSA or SPTSSB subunits determine substrate specificity. SPT also interacts with ORMDL proteins, especially ORMDL3, which negatively regulate SPT activity in the presence of ceramides. Forms dimers of heterodimers with SPTLC2. Interacts with RTN4 (isoform B). Pyridoxal 5'-phosphate serves as cofactor. In terms of processing, phosphorylation at Tyr-164 inhibits activity and promotes cell survival. As to expression, expressed in astrocytes.

The protein resides in the endoplasmic reticulum membrane. It carries out the reaction L-serine + hexadecanoyl-CoA + H(+) = 3-oxosphinganine + CO2 + CoA. The catalysed reaction is octadecanoyl-CoA + L-serine + H(+) = 3-oxoeicosasphinganine + CO2 + CoA. It catalyses the reaction tetradecanoyl-CoA + L-serine + H(+) = 3-oxohexadecasphinganine + CO2 + CoA. The enzyme catalyses dodecanoyl-CoA + L-serine + H(+) = 3-oxotetradecasphinganine + CO2 + CoA. It participates in lipid metabolism; sphingolipid metabolism. With respect to regulation, SPT complex catalytic activity is negatively regulated by ORMDL proteins, including ORMDL3, in the presence of ceramides. This mechanism allows to maintain ceramide levels at sufficient concentrations for the production of complex sphingolipids, but which prevents the accumulation of ceramides to levels that trigger apoptosis. Component of the serine palmitoyltransferase multisubunit enzyme (SPT) that catalyzes the initial and rate-limiting step in sphingolipid biosynthesis by condensing L-serine and activated acyl-CoA (most commonly palmitoyl-CoA) to form long-chain bases. The SPT complex is also composed of SPTLC2 or SPTLC3 and SPTSSA or SPTSSB. Within this complex, the heterodimer with SPTLC2 or SPTLC3 forms the catalytic core. The composition of the serine palmitoyltransferase (SPT) complex determines the substrate preference. The SPTLC1-SPTLC2-SPTSSA complex shows a strong preference for C16-CoA substrate, while the SPTLC1-SPTLC3-SPTSSA isozyme uses both C14-CoA and C16-CoA as substrates, with a slight preference for C14-CoA. The SPTLC1-SPTLC2-SPTSSB complex shows a strong preference for C18-CoA substrate, while the SPTLC1-SPTLC3-SPTSSB isozyme displays an ability to use a broader range of acyl-CoAs, without apparent preference. Required for adipocyte cell viability and metabolic homeostasis. This chain is Serine palmitoyltransferase 1, found in Rattus norvegicus (Rat).